A 309-amino-acid chain; its full sequence is MRREVVVGTRGSRLALAQADWVIDHLRARYPRVSFVRKEIRTTGDNILEVALAKIGDKGLFTKELEQALLHREIDLAVHSMKDLPTGLPEGLVIGAVSVREYPGDVFISRGGERLEELPAGAVLGTSSLRRTAQLLAYRPDLQVIPVRGNVQTRLRKLDEGVVDALVLAWAGLFRLGLTERVTHRIPVAMCLPAVGQGALGIEARADDAEILEMLRTIDHAPTRAAVQAERTLLRRLEGGCQVPVGALGRFRDGRLVLEAVVASLDGTELVRAQESGPADRPEALGNSLAVRLLEMGAGEILARVRAGA.

Cys241 bears the S-(dipyrrolylmethanemethyl)cysteine mark.

Belongs to the HMBS family. As to quaternary structure, monomer. Dipyrromethane serves as cofactor.

It carries out the reaction 4 porphobilinogen + H2O = hydroxymethylbilane + 4 NH4(+). It functions in the pathway porphyrin-containing compound metabolism; protoporphyrin-IX biosynthesis; coproporphyrinogen-III from 5-aminolevulinate: step 2/4. Its function is as follows. Tetrapolymerization of the monopyrrole PBG into the hydroxymethylbilane pre-uroporphyrinogen in several discrete steps. This Desulforudis audaxviator (strain MP104C) protein is Porphobilinogen deaminase.